The following is a 66-amino-acid chain: Large ribosomal subunit protein uL29 (66 aa).

This sequence belongs to the universal ribosomal protein uL29 family.

The chain is Large ribosomal subunit protein uL29 from Thermococcus gammatolerans (strain DSM 15229 / JCM 11827 / EJ3).